A 691-amino-acid chain; its full sequence is MATSGANGPGSATASASNPRKFSEKIALQKQRQAEETAAFEEVMMDIGSTRLQAQKLRLAYTRSSHYGGSLPNVNQIGCGLAEFQSPLHSPLDSSRSTRHHGLVERVQRDPRRMVSPLRRYPRHIDSSPYSPAYLSPPPESGWRRMMPWGNLPAEKGQLFRLPSALNRTSSDSALHTSVMNPNPQDTYPGPTPPSVLPSRRGGFLDGEMDAKVPAIEENLVDDKHLLKPWDAKKLSSSSSRPRSCEVPGINIFPSPDQPANVPVLPPAMSTGGSLPDLTNLHFPPPLPTPLDPEETVYPSLSGGNSTTNLTHTMTHLGISGGLGLGPSYDVPGLHSPLSHPSLQSSLSNPNLQASLSSPQPQLQGSHSHPSLPASSLAHHALPTTSLGHPSLSAPALSSSSSSSSTSSPVLSAPPYPASTPGASPRHRRVPLSPLSLPAGPADARRSQQQLPKQFSPTMSPTLSSITQGVPLDTSKLPTDQRLPPYPYSPPSLVIPSHPPTPKSLQQLPSQACLVQPSGGQPPGRQPHYGTLYPPGSSGHGQQPYHRPINDFSLGNLEQFNMESPSTSLVLDPPAFSEGPGFLGSEGSVSGPQDSHVLNHQNLTHCSRHGSGPNIILTGDSSPGFSKEIAAALAGVPGFEVSASGLELGLGLEDELRMEPLGLEGLTMLSDPCALLPDPAVEDSFRSDRLQ.

Positions 1–20 (MATSGANGPGSATASASNPR) are enriched in polar residues. The segment at 1-30 (MATSGANGPGSATASASNPRKFSEKIALQK) is disordered. Residue Ala2 is modified to N-acetylalanine. Position 51 is an asymmetric dimethylarginine; by PRMT6 (Arg51). Phosphoserine occurs at positions 70, 86, and 90. 3 positions are modified to asymmetric dimethylarginine; by PRMT6: Arg99, Arg120, and Arg123. Phosphoserine is present on Ser136. Arg161 and Arg168 each carry asymmetric dimethylarginine; by PRMT6. Thr169 carries the post-translational modification Phosphothreonine. The residue at position 171 (Ser171) is a Phosphoserine; by AMPK, MARK2, SIK1 and SIK2. Over residues 174-186 (ALHTSVMNPNPQD) the composition is skewed to polar residues. The segment at 174–195 (ALHTSVMNPNPQDTYPGPTPPS) is disordered. Thr192 carries the post-translational modification Phosphothreonine. Lys234 participates in a covalent cross-link: Glycyl lysine isopeptide (Lys-Gly) (interchain with G-Cter in SUMO2). The Nuclear export signal motif lies at 271-287 (TGGSLPDLTNLHFPPPL). Ser274 carries the post-translational modification Phosphoserine; by MARK2. Disordered regions lie at residues 280 to 306 (NLHF…GGNS) and 335 to 491 (HSPL…YSPP). Ser306, Ser368, Ser393, Ser433, and Ser456 each carry phosphoserine. 2 stretches are compositionally biased toward low complexity: residues 335-383 (HSPL…HALP) and 390-411 (PSLS…SPVL). Residues 447–468 (SQQQLPKQFSPTMSPTLSSITQ) show a composition bias toward polar residues. Tyr488 is subject to Phosphotyrosine. Residues Ser489 and Ser492 each carry the phosphoserine modification. Thr501 is modified (phosphothreonine). Residues 513 to 543 (CLVQPSGGQPPGRQPHYGTLYPPGSSGHGQQ) form a disordered region. Residues Ser611, Ser621, and Ser622 each carry the phosphoserine modification.

The protein belongs to the TORC family. Binds, as a tetramer, through its N-terminal region, with the bZIP domain of CREB1. 'Arg-314' in the bZIP domain of CREB1 is essential for this interaction. Interaction, via its C-terminal, with TAF4, enhances recruitment of TAF4 to CREB1. Interacts with SIK2. Interacts with 14-3-3 proteins, YWHAB and YWHAG. Interacts (probably when phosphorylated at Ser-171) with YWHAE. Interacts with calmodulin-dependent catalytic subunit PPP3CA/calcineurin A. Interaction with COP1 mediates nuclear export and degradation of CRTC2. In terms of processing, phosphorylation/dephosphorylation states of Ser-171 are required for regulating transduction of CREB activity. CRTCs/TORCs are inactive when phosphorylated, and active when dephosphorylated at this site. This primary site of phosphorylation, is regulated by cAMP and calcium levels and is dependent on the phosphorylation of SIKs (SIK1 and SIK2) by LKB1. Following adenylyl cyclase activation, dephosphorylated at Ser-171 by PPP3CA/calcineurin A resulting in CRTC2 dissociation from 14-3-3 proteins and PPP3CA. Both insulin and AMPK increase this phosphorylation of CRTC2 while glucagon suppresses it. Phosphorylation at Ser-274 by MARK2 is induced under low glucose conditions and dephosphorylated in response to glucose influx. Phosphorylation at Ser-274 promotes interaction with 14-3-3 proteins and translocation to the cytoplasm. Asymmetric dimethylation of arginine resisues by PRMT6 enhances the association of CRTC2 with CREB on the promoters of gluconeogenic genes.

It localises to the cytoplasm. Its subcellular location is the nucleus. Its function is as follows. Transcriptional coactivator for CREB1 which activates transcription through both consensus and variant cAMP response element (CRE) sites. Acts as a coactivator, in the SIK/TORC signaling pathway, being active when dephosphorylated and acts independently of CREB1 'Ser-133' phosphorylation. Enhances the interaction of CREB1 with TAF4. Regulates gluconeogenesis as a component of the LKB1/AMPK/TORC2 signaling pathway. Regulates the expression of specific genes such as the steroidogenic gene, StAR. Potent coactivator of PPARGC1A and inducer of mitochondrial biogenesis in muscle cells. This chain is CREB-regulated transcription coactivator 2 (Crtc2), found in Rattus norvegicus (Rat).